A 428-amino-acid polypeptide reads, in one-letter code: 4-hydroxy-3-methylbut-2-en-1-yl diphosphate synthase (flavodoxin) (428 aa).

Cys-300, Cys-303, Cys-346, and Glu-353 together coordinate [4Fe-4S] cluster.

Belongs to the IspG family. [4Fe-4S] cluster is required as a cofactor.

It catalyses the reaction (2E)-4-hydroxy-3-methylbut-2-enyl diphosphate + oxidized [flavodoxin] + H2O + 2 H(+) = 2-C-methyl-D-erythritol 2,4-cyclic diphosphate + reduced [flavodoxin]. Its pathway is isoprenoid biosynthesis; isopentenyl diphosphate biosynthesis via DXP pathway; isopentenyl diphosphate from 1-deoxy-D-xylulose 5-phosphate: step 5/6. Functionally, converts 2C-methyl-D-erythritol 2,4-cyclodiphosphate (ME-2,4cPP) into 1-hydroxy-2-methyl-2-(E)-butenyl 4-diphosphate. This is 4-hydroxy-3-methylbut-2-en-1-yl diphosphate synthase (flavodoxin) from Methylobacillus flagellatus (strain ATCC 51484 / DSM 6875 / VKM B-1610 / KT).